An 89-amino-acid chain; its full sequence is Cell division topological specificity factor (89 aa).

Belongs to the MinE family.

Prevents the cell division inhibition by proteins MinC and MinD at internal division sites while permitting inhibition at polar sites. This ensures cell division at the proper site by restricting the formation of a division septum at the midpoint of the long axis of the cell. In Pectobacterium carotovorum subsp. carotovorum (strain PC1), this protein is Cell division topological specificity factor.